The primary structure comprises 593 residues: A-type ATP synthase subunit A (593 aa).

236–243 lines the ATP pocket; that stretch reads GPFGSGKT.

This sequence belongs to the ATPase alpha/beta chains family. Has multiple subunits with at least A(3), B(3), C, D, E, F, H, I and proteolipid K(x).

It localises to the cell membrane. The catalysed reaction is ATP + H2O + 4 H(+)(in) = ADP + phosphate + 5 H(+)(out). Its function is as follows. Component of the A-type ATP synthase that produces ATP from ADP in the presence of a proton gradient across the membrane. The A chain is the catalytic subunit. The chain is A-type ATP synthase subunit A from Pyrobaculum islandicum (strain DSM 4184 / JCM 9189 / GEO3).